Here is a 238-residue protein sequence, read N- to C-terminus: Phosphoribosylaminoimidazole-succinocarboxamide synthase (238 aa).

The protein belongs to the SAICAR synthetase family.

The catalysed reaction is 5-amino-1-(5-phospho-D-ribosyl)imidazole-4-carboxylate + L-aspartate + ATP = (2S)-2-[5-amino-1-(5-phospho-beta-D-ribosyl)imidazole-4-carboxamido]succinate + ADP + phosphate + 2 H(+). It functions in the pathway purine metabolism; IMP biosynthesis via de novo pathway; 5-amino-1-(5-phospho-D-ribosyl)imidazole-4-carboxamide from 5-amino-1-(5-phospho-D-ribosyl)imidazole-4-carboxylate: step 1/2. This is Phosphoribosylaminoimidazole-succinocarboxamide synthase from Alcanivorax borkumensis (strain ATCC 700651 / DSM 11573 / NCIMB 13689 / SK2).